We begin with the raw amino-acid sequence, 335 residues long: MSLDINQIALHQLIKRDEQNLELVLRDSLLEPTTTVVDMVAELHRVYSAKNKAYGLFSEESELAQTLRLQRQGEEDFLAFSRAATGRLRDELAKYPFADGGIVLFCHYRYLAVEYLLVAVLNNLSSMRVNENLDINPTHYLDINHADIVARIDLTEWETNPESTRYLTFLKGRVGRKVADFFMDFLGASEGLNAKAQNRGLLQAVDDFTAEAQLDKAERQNVRQQVYSYCNEQLQSGEEIELESLSKELSGVSEVSFREFTADKGYELEESFPADRSTLRQLTKYAGSGGGLTINFDAMLLGERIFWDPATDTLTIKGTPPNLRDQLQRRTSGGN.

The protein belongs to the YejK family.

Its subcellular location is the cytoplasm. It localises to the nucleoid. The protein is Nucleoid-associated protein CKO_00588 of Citrobacter koseri (strain ATCC BAA-895 / CDC 4225-83 / SGSC4696).